The sequence spans 381 residues: Ribosomal lysine N-methyltransferase set11 (381 aa).

Positions 23 to 224 (PSLEFSVIPD…KGEQIFLCYG (202 aa)) constitute an SET domain. Residue Tyr-223 coordinates S-adenosyl-L-methionine.

This sequence belongs to the class V-like SAM-binding methyltransferase superfamily. RKM2 family.

It localises to the cytoplasm. The protein resides in the nucleus. The protein localises to the nucleolus. In terms of biological role, S-adenosyl-L-methionine-dependent protein-lysine N-methyltransferase that trimethylates 60S ribosomal protein L12 (rpl1201 and rpl1202) at 'Lys-4' and may dimethylate L12 also at 'Lys-40' and 'Lys-41'. Overexpression causes a severe growth defect. Has a role in meiosis. This Schizosaccharomyces pombe (strain 972 / ATCC 24843) (Fission yeast) protein is Ribosomal lysine N-methyltransferase set11 (set11).